Reading from the N-terminus, the 108-residue chain is Protein YcgL (108 aa).

In terms of domain architecture, YcgL spans Met-12–Leu-96.

The sequence is that of Protein YcgL from Escherichia coli O127:H6 (strain E2348/69 / EPEC).